Consider the following 84-residue polypeptide: MKQIFIWLIKGYRMFISPLYPPTCRFRPTCSMYAIEAIERFGVFRGGWMAIRRILRCHPFHPGGYDPVPELGEHCCHHDSGNKG.

The protein belongs to the UPF0161 family.

Its subcellular location is the cell inner membrane. In terms of biological role, could be involved in insertion of integral membrane proteins into the membrane. This Nostoc sp. (strain PCC 7120 / SAG 25.82 / UTEX 2576) protein is Putative membrane protein insertion efficiency factor.